The primary structure comprises 119 residues: Protein yippee-like 2 (119 aa).

The Yippee domain maps to 19-116; that stretch reads RTYSCIHCRA…IELAHMIKDN (98 aa). Zn(2+) contacts are provided by Cys23, Cys26, Cys79, and Cys82.

The protein belongs to the yippee family. May interact with FAM168B.

The protein localises to the nucleus. Its subcellular location is the nucleolus. This is Protein yippee-like 2 (YPEL2) from Chlorocebus aethiops (Green monkey).